A 528-amino-acid polypeptide reads, in one-letter code: Ribonuclease Y (528 aa).

A helical membrane pass occupies residues 15–35; the sequence is SLLVFALICGSIIGYFLYSFF. In terms of domain architecture, KH spans 217–277; the sequence is NISVVNIPNE…IRREIAKKTL (61 aa). The HD domain maps to 343-436; the sequence is VLKHSLEVAF…VAIADTLSSA (94 aa).

Belongs to the RNase Y family.

It localises to the cell membrane. In terms of biological role, endoribonuclease that initiates mRNA decay. The chain is Ribonuclease Y from Onion yellows phytoplasma (strain OY-M).